Here is a 159-residue protein sequence, read N- to C-terminus: U1 small nuclear ribonucleoprotein C (159 aa).

Residues 4-36 (FYCDYCDTYLTHDSPSVRKTHCSGRKHKENVKD) form a Matrin-type zinc finger. At Tyr-8 the chain carries Phosphotyrosine. Ser-17 is modified (phosphoserine). The residue at position 52 (Lys-52) is an N6-acetyllysine. The tract at residues 62 to 96 (IPPAPFSAPPPAGAMIPPPPSLPGPPRPGMMPAPH) is disordered. A compositionally biased stretch (pro residues) spans 63-92 (PPAPFSAPPPAGAMIPPPPSLPGPPRPGMM).

Belongs to the U1 small nuclear ribonucleoprotein C family. Component of the U1 snRNP. The U1 snRNP is composed of the U1 snRNA and the 7 core Sm proteins SNRPB, SNRPD1, SNRPD2, SNRPD3, SNRPE, SNRPF and SNRPG that assemble in a heptameric protein ring on the Sm site of the small nuclear RNA to form the core snRNP, and at least 3 U1 snRNP-specific proteins SNRNP70/U1-70K, SNRPA/U1-A and SNRPC/U1-C. SNRPC/U1-C interacts with U1 snRNA and the 5' splice-site region of the pre-mRNA. Interacts (via N-terminus) with TIA1 (via C-terminus); thereby promoting spliceosomal U1 snRNP recruitment to 5' splice sites.

It is found in the nucleus. In terms of biological role, component of the spliceosomal U1 snRNP, which is essential for recognition of the pre-mRNA 5' splice-site and the subsequent assembly of the spliceosome. SNRPC/U1-C is directly involved in initial 5' splice-site recognition for both constitutive and regulated alternative splicing. The interaction with the 5' splice-site seems to precede base-pairing between the pre-mRNA and the U1 snRNA. Stimulates commitment or early (E) complex formation by stabilizing the base pairing of the 5' end of the U1 snRNA and the 5' splice-site region. In Rattus norvegicus (Rat), this protein is U1 small nuclear ribonucleoprotein C.